A 213-amino-acid chain; its full sequence is DELTA-actitoxin-Aas1a (213 aa).

The signal sequence occupies residues 1-19 (MSRLIIAFIVVTMVCSAIA). Positions 20 to 34 (LPKKKVEPLEKDEKR) are excised as a propeptide. The segment at 37-46 (AVAGAVIEGG) is plays an important role in the hemolytic activity. The tract at residues 45-64 (GGNLVMSVLDRILEAIGDVN) is N-terminal region. Phosphocholine-binding residues include serine 88, valine 121, serine 139, proline 141, tyrosine 167, tyrosine 171, and tyrosine 172. Positions 139–154 (SIPYDYNLYSNWWNVK) are trp-rich region, which is important for the binding to lipid membrane. The Cell attachment site, crucial for protein stability motif lies at 178 to 180 (KGD).

It belongs to the actinoporin family. Sea anemone subfamily. Octamer or nonamer in membranes. Monomer in the soluble state.

It is found in the secreted. Its subcellular location is the nematocyst. The protein resides in the target cell membrane. Functionally, pore-forming protein that forms cation-selective hydrophilic pores of around 1 nm and causes cytolysis. Pore formation is a multi-step process that involves specific recognition of membrane sphingomyelin (but neither cholesterol nor phosphatidylcholine) using aromatic rich region and adjacent phosphocholine (POC) binding site, firm binding to the membrane (mainly driven by hydrophobic interactions) accompanied by the transfer of the N-terminal region to the lipid-water interface and finally pore formation after oligomerization of monomers. This protein shows potent hemolytic activity (EC(50)=8.8 ng/ml) that is specifically inhibited by sphingomyelin. Shows no phospholipase A2 activity, nor antimicrobial activity against the four bacteria tested. Is lethal to crayfish. This chain is DELTA-actitoxin-Aas1a, found in Anthopleura asiatica (Sea anemone).